The primary structure comprises 532 residues: Protein tweety homolog 2 (532 aa).

Residues 1 to 44 (MPAARVEYIAPWWVVWLHSVPHLGLRLQRVDSTFSPGDETYQES) are Extracellular-facing. A helical transmembrane segment spans residues 45-65 (LLFLGVLAAIGLGLNLIFLTV). The Cytoplasmic portion of the chain corresponds to 66-87 (YLVCTCCCRRDHTVQTKQQESC). A helical membrane pass occupies residues 88–108 (CVTWTAVVAGLLCCAAVGVGF). Residues 109-213 (YGNSETNDGM…QTAYVEYYRW (105 aa)) are Extracellular-facing. Ca(2+) is bound by residues E113 and D116. An N-linked (GlcNAc...) asparagine glycan is attached at N129. Residues 164 to 166 (RGD) carry the RGD motif. Phosphothreonine is present on T199. Residues 214-234 (LSYLLLFILDLVICLVTCLGL) traverse the membrane as a helical segment. Over 235-240 (ARRSKC) the chain is Cytoplasmic. A helical membrane pass occupies residues 241–261 (LLASMLCCGILTLILSWASLA). Topologically, residues 262–385 (ADAAAAVGTS…DALTGICYDG (124 aa)) are extracellular. 2 disulfide bridges follow: C274/C382 and C300/C367. N-linked (GlcNAc...) asparagine glycosylation is found at N283 and N352. The helical transmembrane segment at 386–406 (IEGLLFLGLFSLLAALAFSTL) threads the bilayer. Over 407 to 532 (TCAGPRAWKY…EHLRHYEFPS (126 aa)) the chain is Cytoplasmic. Position 504 is a phosphoserine (S504). The PY-motif; mediates interaction with NEDD4L motif lies at 506 to 509 (PPTY).

Belongs to the tweety family. Forms cis-homodimers in the presence of Ca(+2) and forms monomers and trans-dimers in the absence of Ca(2+). Interacts with NEDD4L. Ubiquitinated by NEDD4L, leading to its proteasomal degradation.

The protein resides in the cell membrane. It carries out the reaction chloride(in) = chloride(out). The catalysed reaction is L-glutamate(out) = L-glutamate(in). Its activity is regulated as follows. Inhibited by (4-[(2-butyl-6,7-dichloro-2- cyclopentyl-2,3-dihydro-1-oxo-1H-inden-5-yl)oxy]butanoic acid). In terms of biological role, calcium-independent, swelling-dependent volume-regulated anion channel (VRAC-swell) which plays a pivotal role in the process of regulatory volume decrease (RVD) in the brain through the efflux of anions like chloride and organic osmolytes like glutamate. Probable large-conductance Ca(2+)-activated chloride channel. This Mus musculus (Mouse) protein is Protein tweety homolog 2 (Ttyh2).